The primary structure comprises 141 residues: Aspartate 1-decarboxylase (141 aa).

The active-site Schiff-base intermediate with substrate; via pyruvic acid is S25. S25 carries the pyruvic acid (Ser) modification. T57 contributes to the substrate binding site. The Proton donor role is filled by Y58. Position 73–75 (73–75) interacts with substrate; the sequence is GAA. The tract at residues 121–141 is disordered; it reads ASAPVPGSRTERSPQAVVAGG.

The protein belongs to the PanD family. As to quaternary structure, heterooctamer of four alpha and four beta subunits. Pyruvate is required as a cofactor. Is synthesized initially as an inactive proenzyme, which is activated by self-cleavage at a specific serine bond to produce a beta-subunit with a hydroxyl group at its C-terminus and an alpha-subunit with a pyruvoyl group at its N-terminus.

The protein localises to the cytoplasm. It catalyses the reaction L-aspartate + H(+) = beta-alanine + CO2. The protein operates within cofactor biosynthesis; (R)-pantothenate biosynthesis; beta-alanine from L-aspartate: step 1/1. Its function is as follows. Catalyzes the pyruvoyl-dependent decarboxylation of aspartate to produce beta-alanine. The protein is Aspartate 1-decarboxylase of Streptomyces griseus subsp. griseus (strain JCM 4626 / CBS 651.72 / NBRC 13350 / KCC S-0626 / ISP 5235).